A 448-amino-acid chain; its full sequence is Adenylosuccinate synthetase (448 aa).

GTP contacts are provided by residues Gly22–Lys28 and Gly50–Thr52. The active-site Proton acceptor is Asp23. Mg(2+)-binding residues include Asp23 and Gly50. IMP contacts are provided by residues Asp23 to Lys26, Asn48 to His51, Thr139, Arg153, Gln234, Thr249, and Arg321. Residue His51 is the Proton donor of the active site. Ser317–Arg323 serves as a coordination point for substrate. GTP is bound by residues Arg323, Lys349–Asp351, and Ser431–Gly433.

The protein belongs to the adenylosuccinate synthetase family. Homodimer. Mg(2+) is required as a cofactor.

It is found in the cytoplasm. The catalysed reaction is IMP + L-aspartate + GTP = N(6)-(1,2-dicarboxyethyl)-AMP + GDP + phosphate + 2 H(+). It functions in the pathway purine metabolism; AMP biosynthesis via de novo pathway; AMP from IMP: step 1/2. Functionally, plays an important role in the de novo pathway of purine nucleotide biosynthesis. Catalyzes the first committed step in the biosynthesis of AMP from IMP. In Paraburkholderia phytofirmans (strain DSM 17436 / LMG 22146 / PsJN) (Burkholderia phytofirmans), this protein is Adenylosuccinate synthetase.